The sequence spans 358 residues: Probable undecaprenyl-phosphate N-acetylglucosaminyl 1-phosphate transferase (358 aa).

The next 11 helical transmembrane spans lie at 10 to 32 (VVAFIVSLLTVLIITPIVKRIAI), 53 to 72 (MGGLAIFIGVVAGVLASGIY), 76 to 93 (RMTAITVGAFIIIVLGIL), 105 to 127 (FLIQLGVAIMIVSTGLKMDFFSV), 137 to 157 (GWMAYPLTVLWIVGITNAINL), 164 to 181 (LAAGLSVIGLSTIAVMAL), 186 to 205 (VLILSLSLVVIASTLGFLFY), 218 to 235 (GSLFLGYSISILSLLGLY), 240 to 262 (LFSIVIPIIILGVPIFDTTFAII), 292 to 311 (MSVLVIYLIGFIFSISAIVL), and 316 to 338 (IWLSLFIIFILIIFMQIIAEVTG).

The protein belongs to the glycosyltransferase 4 family. Mg(2+) is required as a cofactor. The cofactor is Mn(2+).

The protein resides in the cell membrane. It catalyses the reaction di-trans,octa-cis-undecaprenyl phosphate + UDP-N-acetyl-alpha-D-glucosamine = N-acetyl-alpha-D-glucosaminyl-di-trans,octa-cis-undecaprenyl diphosphate + UMP. It functions in the pathway cell wall biogenesis; poly(glucopyranosyl N-acetylgalactosamine 1-phosphate) teichoic acid biosynthesis. It participates in cell wall biogenesis; poly(glycerol phosphate) teichoic acid biosynthesis. Catalyzes the formation of undecaprenyl-PP-N-acetylglucosamine. Involved in the synthesis of anionic cell-wall polymers as it mediates the initiation of the linkage unit formation that appears to be common to the two types of teichoic acids attached to the peptidoglycan of B.subtilis; may also be involved in teichuronic acid biosynthesis. The sequence is that of Probable undecaprenyl-phosphate N-acetylglucosaminyl 1-phosphate transferase (tagO) from Bacillus subtilis (strain 168).